The sequence spans 224 residues: ATP-dependent dethiobiotin synthetase BioD (224 aa).

14–19 (GIGKTV) lines the ATP pocket. Thr18 serves as a coordination point for Mg(2+). Lys39 is a catalytic residue. Position 43 (Ser43) interacts with substrate. ATP is bound by residues Asp56, 117-120 (EGVG), and 177-178 (NE). Residues Asp56 and Glu117 each coordinate Mg(2+).

The protein belongs to the dethiobiotin synthetase family. As to quaternary structure, homodimer. The cofactor is Mg(2+).

Its subcellular location is the cytoplasm. The enzyme catalyses (7R,8S)-7,8-diammoniononanoate + CO2 + ATP = (4R,5S)-dethiobiotin + ADP + phosphate + 3 H(+). Its pathway is cofactor biosynthesis; biotin biosynthesis; biotin from 7,8-diaminononanoate: step 1/2. Functionally, catalyzes a mechanistically unusual reaction, the ATP-dependent insertion of CO2 between the N7 and N8 nitrogen atoms of 7,8-diaminopelargonic acid (DAPA, also called 7,8-diammoniononanoate) to form a ureido ring. The polypeptide is ATP-dependent dethiobiotin synthetase BioD (Xanthomonas campestris pv. campestris (strain 8004)).